We begin with the raw amino-acid sequence, 1081 residues long: MTSKRPGGSSFQPEVKRKRESDEFEQCYVSRFENELPSVPTIDKTGWARPAVDKDLGISKSIACQILEVETYHEDGSATSYDRTNVKLYGVTKSGNSICVIVTDYFPHFYFQAPQGFGVEHIGTAQSAICNMVAAAKRRGGSGQAQLPGKVVDNLVHVEIVHGENLYYFRGADTKVPFVKVSGSTEALHKARMELKNGVNLMGKGPVNVGNLYESNINVIVMFLAKTNIVGCGWIEIPAGKCRILSNSEKSSRCQIEVTVPVKNLIVHESDGEWAGIAPIRTLSLDIECIGRRGVFPEAIKDPIIQIANLVKIEGEAEPFVRNCFVLGTCAPVVGSNIIQCVNEKVLLEKWAEFVREVDPDIITGYNILNFDLPYILDRAKVLSLPQVSHLGRQKEKGSVVRDAAISSKQMGSRVNKSIDIHGRIIFDVLQVVLRDYKLRSYTLNSVSYQFLSEQKEDVEHNIIPDLQRGDEQTRRRLAQYCLKDAYLPLRLLDKLMSIINYIEMARVTGVPMNFLLTKGQQIKILSMMLRRCKQNNFFLPVIEANSGDGEGYEGATVIDPIRGFYNEPIATLDFASLYPSIMIAHNLCYTTLLKSPQGVENEDYIRTPSGQYFATKSKRRGLLPEILEDILAARKRAKNDMKNEKDEFKRMVYNGRQLALKISANSVYGFTGATVGKLPCLEISQSVTAFGRKMIDMTKLEVERIYKKGALDGKCPADAKVIYGDTDSVMVKFGVETVAQAMEIGLDAAKEVSKIFTPPIKLEFEKVYSPYLLINKKRYAGLYFTKPDVHDKMDCKGLETVRRDNCPLVAKVLGVCLEKLLIERDQQSALDFAKRTISDLLCNKIDISLLIISKELTKSGDKYQAKQAHVELAARMKKRDAGSAPRLGDRVPYVFVAAAKNVPAYERAEDPTFVLQNNIPLDTKHYLTNQLAKPLARIFEPILGDRAEKILVEGEHTRVRTVVQSKVGGLAAFTTKSATCLGCKSVLPRAESENAVCKHCEPKLPTIFASRMNTMHELENHFGRLWTECQNCAKTMQDKVNCSARDCPIYYMREKVRNELSEASAVIERFGDPCFQAPTK.

Positions 1–22 (MTSKRPGGSSFQPEVKRKRESD) are disordered. Residues Cys-981, Cys-984, Cys-998, and Cys-1001 each coordinate Zn(2+). The segment at 981–1001 (CLGCKSVLPRAESENAVCKHC) adopts a CysA-type zinc-finger fold. Cys-1030, Cys-1033, Cys-1043, and Cys-1048 together coordinate [4Fe-4S] cluster. Positions 1030–1048 (CQNCAKTMQDKVNCSARDC) match the CysB motif motif.

This sequence belongs to the DNA polymerase type-B family. In terms of assembly, heterodimer with subunits of 125 kDa and 50 kDa. The 125 kDa subunit contains the polymerase active site and most likely the active site for the 3'-5' exonuclease activity. It depends on [4Fe-4S] cluster as a cofactor.

Its subcellular location is the nucleus. It catalyses the reaction DNA(n) + a 2'-deoxyribonucleoside 5'-triphosphate = DNA(n+1) + diphosphate. Functionally, possesses two enzymatic activities: DNA synthesis (polymerase) and an exonucleolytic activity that degrades single stranded DNA in the 3'- to 5'-direction. Required with its accessory proteins (proliferating cell nuclear antigen (PCNA) and replication factor C (RFC) or activator 1) for leading strand synthesis. Also involved in completing Okazaki fragments initiated by the DNA polymerase alpha/primase complex. This chain is DNA polymerase delta catalytic subunit, found in Caenorhabditis elegans.